Here is a 249-residue protein sequence, read N- to C-terminus: 5'-nucleotidase SurE (249 aa).

Positions 9, 10, 40, and 92 each coordinate a divalent metal cation.

This sequence belongs to the SurE nucleotidase family. Requires a divalent metal cation as cofactor.

The protein localises to the cytoplasm. The catalysed reaction is a ribonucleoside 5'-phosphate + H2O = a ribonucleoside + phosphate. In terms of biological role, nucleotidase that shows phosphatase activity on nucleoside 5'-monophosphates. The protein is 5'-nucleotidase SurE of Shewanella sediminis (strain HAW-EB3).